We begin with the raw amino-acid sequence, 238 residues long: CFA/I fimbrial subunit A (238 aa).

The first 19 residues, 1–19 (MHKLFYLLSLLMAPFVANA), serve as a signal peptide directing secretion.

It localises to the fimbrium. Might function as a shuttle protein in the transport of fimbria through the periplasmic space or might function as an adhesin. This is CFA/I fimbrial subunit A (cfaA) from Escherichia coli.